A 177-amino-acid polypeptide reads, in one-letter code: Glutamyl-tRNA(Gln) amidotransferase subunit F, mitochondrial (177 aa).

Residues Met1 to Phe16 constitute a mitochondrion transit peptide. The segment at Pro148–Gly177 is disordered. Residues Thr153 to Pro164 are compositionally biased toward polar residues.

Belongs to the GatF family. As to quaternary structure, subunit of the heterotrimeric GatFAB amidotransferase (AdT) complex, composed of A, B and F subunits.

The protein localises to the mitochondrion inner membrane. It catalyses the reaction L-glutamyl-tRNA(Gln) + L-glutamine + ATP + H2O = L-glutaminyl-tRNA(Gln) + L-glutamate + ADP + phosphate + H(+). In terms of biological role, allows the formation of correctly charged Gln-tRNA(Gln) through the transamidation of misacylated Glu-tRNA(Gln) in the mitochondria. The reaction takes place in the presence of glutamine and ATP through an activated gamma-phospho-Glu-tRNA(Gln). Required for proper protein synthesis within the mitochondrion. This Scheffersomyces stipitis (strain ATCC 58785 / CBS 6054 / NBRC 10063 / NRRL Y-11545) (Yeast) protein is Glutamyl-tRNA(Gln) amidotransferase subunit F, mitochondrial.